The sequence spans 447 residues: Argininosuccinate synthase (447 aa).

ATP contacts are provided by residues 17 to 25 (AFSGGLDTS) and A43. Residue Y99 participates in L-citrulline binding. G129 and T131 together coordinate ATP. 3 residues coordinate L-aspartate: T131, N135, and D136. Position 135 (N135) interacts with L-citrulline. D136 provides a ligand contact to ATP. L-citrulline contacts are provided by R139 and S192. D194 contacts ATP. Residues T201, E203, and E280 each coordinate L-citrulline.

This sequence belongs to the argininosuccinate synthase family. Type 2 subfamily. Homotetramer.

The protein localises to the cytoplasm. It carries out the reaction L-citrulline + L-aspartate + ATP = 2-(N(omega)-L-arginino)succinate + AMP + diphosphate + H(+). The protein operates within amino-acid biosynthesis; L-arginine biosynthesis; L-arginine from L-ornithine and carbamoyl phosphate: step 2/3. The chain is Argininosuccinate synthase from Escherichia coli O1:K1 / APEC.